The following is a 1131-amino-acid chain: Protein TOPLESS (1131 aa).

Residues Leu4–Phe36 enclose the LisH domain. Residues Phe34–Lys92 form the CTLH domain. Ser214 carries the phosphoserine modification. Residues Thr286–Lys305 are disordered. WD repeat units follow at residues Ser353 to Gln393, Glu415 to Gln454, Ala460 to Thr501, Gly504 to Asp545, Ala548 to Thr591, Phe595 to Ala634, Gly639 to His678, Asp710 to Gln756, Leu766 to Thr805, Asn833 to Thr871, Pro874 to Lys914, Gly917 to Ser956, Asn967 to Gln1005, Glu1010 to Arg1049, and Leu1060 to Gly1102. The segment at Lys1100 to Arg1131 is disordered.

Tetramer. Homodimer. Interacts (via the LisH domain) with WUS (via the C-terminal domain). Interacts with NINJA/AFPH2. Interacts with IAA1; IAA2; IAA3; IAA4; IAA6; IAA8; IAA9; IAA11; IAA13; IAA14; IAA17; IAA18; IAA26; IAA27 and IAA28. Interacts (via the LisH domain) with IAA12/BDL (via domain I). Can form a complex with IAA12 and ARF5. Interacts with AP2 (via EAR motif) and HDA19. Interacts with TIFY5A/JAZ8 (via EAR motif). Interacts with SPEAR3/TIE1. Interacts with SPL (via EAR motif). Interacts with ZAT2 and ZAT3 (via the EAR motif). Interacts with JAZ13 (via EAR motif). Interacts with GIR1 and GIR2. Expressed in embryo and in extraembryonic tissues. Expressed in inflorescences, flowers, floral meristems, developing anthers and ovules. Detected in the vascular tissues, shoot apical meristem, cotyledons and young leaves. Expressed ubiquitously in the pistils, stamens and pollens.

The protein resides in the nucleus. Transcriptional corepressor. May repress the expression of root-promoting genes in the top half of the embryo to allow proper differentiation of the shoot pole during the transition stage of embryogenesis. Regulates the expression of PLT1 and PLT2. Negative regulator of jasmonate responses. Negative regulator of auxin responses. Negative regulator of multiple floral organ identity genes. Required for ovule development. This chain is Protein TOPLESS (TPL), found in Arabidopsis thaliana (Mouse-ear cress).